A 387-amino-acid chain; its full sequence is 3-ketoacyl-CoA thiolase (387 aa).

Residue C91 is the Acyl-thioester intermediate of the active site. Active-site proton acceptor residues include H343 and C373.

The protein belongs to the thiolase-like superfamily. Thiolase family. Heterotetramer of two alpha chains (FadB) and two beta chains (FadA).

The protein localises to the cytoplasm. It carries out the reaction an acyl-CoA + acetyl-CoA = a 3-oxoacyl-CoA + CoA. The protein operates within lipid metabolism; fatty acid beta-oxidation. In terms of biological role, catalyzes the final step of fatty acid oxidation in which acetyl-CoA is released and the CoA ester of a fatty acid two carbons shorter is formed. The sequence is that of 3-ketoacyl-CoA thiolase from Shewanella baltica (strain OS155 / ATCC BAA-1091).